The primary structure comprises 214 residues: Putative archaetidylserine decarboxylase proenzyme (214 aa).

The Schiff-base intermediate with substrate; via pyruvic acid role is filled by S180. S180 carries the pyruvic acid (Ser); by autocatalysis modification.

It belongs to the phosphatidylserine decarboxylase family. PSD-A subfamily. In terms of assembly, heterodimer of a large membrane-associated beta subunit and a small pyruvoyl-containing alpha subunit. Requires pyruvate as cofactor. Is synthesized initially as an inactive proenzyme. Formation of the active enzyme involves a self-maturation process in which the active site pyruvoyl group is generated from an internal serine residue via an autocatalytic post-translational modification. Two non-identical subunits are generated from the proenzyme in this reaction, and the pyruvate is formed at the N-terminus of the alpha chain, which is derived from the carboxyl end of the proenzyme. The post-translation cleavage follows an unusual pathway, termed non-hydrolytic serinolysis, in which the side chain hydroxyl group of the serine supplies its oxygen atom to form the C-terminus of the beta chain, while the remainder of the serine residue undergoes an oxidative deamination to produce ammonia and the pyruvoyl prosthetic group on the alpha chain.

The protein localises to the cell membrane. It catalyses the reaction archaetidylserine + H(+) = archaetidylethanolamine + CO2. In terms of biological role, catalyzes the formation of archaetidylethanolamine (PtdEtn) from archaetidylserine (PtdSer). The protein is Putative archaetidylserine decarboxylase proenzyme of Methanopyrus kandleri (strain AV19 / DSM 6324 / JCM 9639 / NBRC 100938).